The following is an 83-amino-acid chain: Large ribosomal subunit protein bL27c (83 aa).

The tract at residues 1-21 (MAHKKGAGSTKNGRDSNAKRL) is disordered.

It belongs to the bacterial ribosomal protein bL27 family.

Its subcellular location is the plastid. The protein resides in the chloroplast. The protein is Large ribosomal subunit protein bL27c of Phaeodactylum tricornutum (strain CCAP 1055/1).